A 104-amino-acid polypeptide reads, in one-letter code: Cytochrome c-551 (104 aa).

A signal peptide spans 1–22; sequence MKPYALLSLLATGTLLAQGAWA. Heme c is bound by residues Cys-34, Cys-37, His-38, and Met-83.

Binds 1 heme c group covalently per subunit.

Its subcellular location is the periplasm. Its function is as follows. Electron donor for cytochrome cd1 in nitrite and nitrate respiration. The sequence is that of Cytochrome c-551 (nirM) from Pseudomonas aeruginosa (strain ATCC 15692 / DSM 22644 / CIP 104116 / JCM 14847 / LMG 12228 / 1C / PRS 101 / PAO1).